Here is a 442-residue protein sequence, read N- to C-terminus: Endothelin receptor type B (442 aa).

A signal peptide spans 1–26; sequence MQPPPSLCGRALVALVLACGLSRIWG. At 27-101 the chain is on the extracellular side; it reads EERGFPPDRA…GSIEIKETFK (75 aa). N-linked (GlcNAc...) asparagine glycosylation is present at asparagine 59. The tract at residues 69-88 is disordered; the sequence is AEVPKGDRTAGSPPRTISPP. A helical transmembrane segment spans residues 102-126; the sequence is YINTVVSCLVFVLGIIGNSTLLRII. At 127–137 the chain is on the cytoplasmic side; it reads YKNKCMRNGPN. Residues 138 to 163 traverse the membrane as a helical segment; that stretch reads ILIASLALGDLLHIIIDIPITVYKLL. The Extracellular portion of the chain corresponds to 164-175; the sequence is AEDWPFGVEMCK. Cysteine 174 and cysteine 255 are joined by a disulfide. A helical membrane pass occupies residues 176-197; that stretch reads LVPFIQKASVGITVLSLCALSI. Residues 198-218 lie on the Cytoplasmic side of the membrane; it reads DRYRAVASWSRIKGIGVPKWT. Residues 219-243 traverse the membrane as a helical segment; that stretch reads AVEIVLIWVVSVVLAVPEAVGFDMI. Residues 244-271 lie on the Extracellular side of the membrane; sequence TIDYKGRYLRICLLHPTQKTAFMQFYKT. The chain crosses the membrane as a helical span at residues 272–296; sequence AKDWWLFSFYFCLPLAITAFFYTLM. The Cytoplasmic segment spans residues 297–324; sequence TCEMLRKKSGMQIALNDHLKQRREVAKT. Phosphoserine is present on serine 305. The chain crosses the membrane as a helical span at residues 325–350; that stretch reads VFCLVLVFALCWLPLHLSRILKLTIY. Over 351 to 362 the chain is Extracellular; the sequence is DQNDPNRCELLS. Residues 363 to 389 traverse the membrane as a helical segment; it reads FLLVLDYIGINMASLNSCINPIALYLV. The Cytoplasmic portion of the chain corresponds to 390 to 442; the sequence is SKRFKNCFKSCLCCWCQSFEEKQSLEEKQSCLKFKANDHGYDNFRSSNKYSSS. S-palmitoyl cysteine attachment occurs at residues cysteine 402, cysteine 403, and cysteine 405. Serine 419 carries the phosphoserine modification. At tyrosine 439 the chain carries Phosphotyrosine. Phosphoserine is present on residues serine 440, serine 441, and serine 442.

Belongs to the G-protein coupled receptor 1 family. Endothelin receptor subfamily. EDNRB sub-subfamily.

It is found in the cell membrane. In terms of biological role, non-specific receptor for endothelin 1, 2, and 3. Mediates its action by association with G proteins that activate a phosphatidylinositol-calcium second messenger system. The polypeptide is Endothelin receptor type B (EDNRB) (Canis lupus familiaris (Dog)).